Consider the following 347-residue polypeptide: Tetraacyldisaccharide 4'-kinase (347 aa).

54 to 61 (TVGGAGKT) contacts ATP.

It belongs to the LpxK family.

It carries out the reaction a lipid A disaccharide + ATP = a lipid IVA + ADP + H(+). It functions in the pathway glycolipid biosynthesis; lipid IV(A) biosynthesis; lipid IV(A) from (3R)-3-hydroxytetradecanoyl-[acyl-carrier-protein] and UDP-N-acetyl-alpha-D-glucosamine: step 6/6. Functionally, transfers the gamma-phosphate of ATP to the 4'-position of a tetraacyldisaccharide 1-phosphate intermediate (termed DS-1-P) to form tetraacyldisaccharide 1,4'-bis-phosphate (lipid IVA). This chain is Tetraacyldisaccharide 4'-kinase, found in Rhizobium etli (strain CIAT 652).